A 395-amino-acid polypeptide reads, in one-letter code: ATP phosphoribosyltransferase regulatory subunit (395 aa).

Belongs to the class-II aminoacyl-tRNA synthetase family. HisZ subfamily. Heteromultimer composed of HisG and HisZ subunits.

The protein resides in the cytoplasm. It participates in amino-acid biosynthesis; L-histidine biosynthesis; L-histidine from 5-phospho-alpha-D-ribose 1-diphosphate: step 1/9. Functionally, required for the first step of histidine biosynthesis. May allow the feedback regulation of ATP phosphoribosyltransferase activity by histidine. This Pseudomonas fluorescens (strain Pf0-1) protein is ATP phosphoribosyltransferase regulatory subunit.